The primary structure comprises 218 residues: 3-dehydroquinate dehydratase (218 aa).

Residues 29–31 (EFR) and R56 contribute to the 3-dehydroquinate site. Catalysis depends on H116, which acts as the Proton donor/acceptor. The Schiff-base intermediate with substrate role is filled by K142. 3 residues coordinate 3-dehydroquinate: R180, S200, and Q204.

This sequence belongs to the type-I 3-dehydroquinase family. Homodimer.

The catalysed reaction is 3-dehydroquinate = 3-dehydroshikimate + H2O. Its pathway is metabolic intermediate biosynthesis; chorismate biosynthesis; chorismate from D-erythrose 4-phosphate and phosphoenolpyruvate: step 3/7. Its function is as follows. Involved in the third step of the chorismate pathway, which leads to the biosynthesis of aromatic amino acids. Catalyzes the cis-dehydration of 3-dehydroquinate (DHQ) and introduces the first double bond of the aromatic ring to yield 3-dehydroshikimate. The protein is 3-dehydroquinate dehydratase of Methanococcus maripaludis (strain C5 / ATCC BAA-1333).